The sequence spans 217 residues: tRNA (guanine-N(7)-)-methyltransferase (217 aa).

Residues glutamate 44, glutamate 69, aspartate 96, and aspartate 118 each coordinate S-adenosyl-L-methionine. Residue aspartate 118 is part of the active site. Residues lysine 122, aspartate 154, and 191 to 194 (TEYE) each bind substrate.

It belongs to the class I-like SAM-binding methyltransferase superfamily. TrmB family.

It catalyses the reaction guanosine(46) in tRNA + S-adenosyl-L-methionine = N(7)-methylguanosine(46) in tRNA + S-adenosyl-L-homocysteine. It functions in the pathway tRNA modification; N(7)-methylguanine-tRNA biosynthesis. In terms of biological role, catalyzes the formation of N(7)-methylguanine at position 46 (m7G46) in tRNA. In Bacillus anthracis (strain CDC 684 / NRRL 3495), this protein is tRNA (guanine-N(7)-)-methyltransferase.